A 592-amino-acid chain; its full sequence is MGVTIRNRNYDHGSLPFLQSLLAILLVTTTTLHINGVEAFHEIHYNLQSVGAENVKQVHRTGYHFQPKQNWINDPNGPMYYKGVYHLFYQYNPKGAVWGNIVWAHSVSTDLINWTPLEPAIFPSKPFDKYGCRSGSATILPGNKPVILYTGIVEGPPKNVQVQNYAIPANLSDPYLRKWIKPDNNPLVVANNGENATAFRDPTTAWLDKSGHWKMLVGSKRNRRGIAYLYRSKDFIKWTKAKHPIHSQANTGMWECPDFFPVSLKGLNGLDTSVTGESVKHVLKVSLDLTRYEYYTVGTYLTDKDRYIPDNTSVDGWAGLRYDYGNFYASKTFFDPSKNRRILWGWANESDSTAHDVAKGWAGIQLIPRTLWLDPSGKQLMQWPIEELETLRGSKVKFSRKQDLSKGILVEVKGITAAQADVEVTFSFKSLAKREPFDPKWLEYDAEKICSLKGSTVQGGVGPFGLLTLASEKLEEYTPVFFRVFKAQNTHKVLMCSDATRSSLKEGLYRPSFAGFVDVDLATDKKISLRSLIDNSVVESFGAKGKTCISSRVYPTLAVYENAHLYVFNNGSETITVENLDAWSMKKPLRMN.

An N-terminal signal peptide occupies residues 1 to 39 (MGVTIRNRNYDHGSLPFLQSLLAILLVTTTTLHINGVEA). The propeptide occupies 40-48 (FHEIHYNLQ). Asp-74 is a catalytic residue. An N-linked (GlcNAc...) (complex) asparagine glycan is attached at Asn-170. Asn-195 carries N-linked (GlcNAc...) asparagine glycosylation. The N-linked (GlcNAc...) (complex) asparagine glycan is linked to Asn-311. Asn-348 carries N-linked (GlcNAc...) (high mannose) asparagine glycosylation. Asn-570 carries an N-linked (GlcNAc...) asparagine glycan.

The protein belongs to the glycosyl hydrolase 32 family. In terms of tissue distribution, in leaves and roots of young plants.

It is found in the secreted. The protein localises to the cell wall. It catalyses the reaction Hydrolysis of terminal non-reducing beta-D-fructofuranoside residues in beta-D-fructofuranosides.. May play an important role in phloem unloading and in stress response. The sequence is that of Beta-fructofuranosidase, insoluble isoenzyme 1 (INV1) from Daucus carota (Wild carrot).